We begin with the raw amino-acid sequence, 342 residues long: Cyclin-D3-1 (342 aa).

Over residues 322–334 (VGSPATNYESSAS) the composition is skewed to polar residues. Positions 322 to 342 (VGSPATNYESSASSKRRRICR) are disordered.

Belongs to the cyclin family. Cyclin D subfamily.

The chain is Cyclin-D3-1 (CYCD3-1) from Oryza sativa subsp. japonica (Rice).